The following is a 241-amino-acid chain: uncharacterized protein (241 aa).

Residues 147 to 212 (FSYRSVILTL…EMYAWINSAQ (66 aa)) enclose the HTH luxR-type domain.

This is an uncharacterized protein from Escherichia coli O157:H7.